Consider the following 213-residue polypeptide: 3-dehydroquinate dehydratase (213 aa).

3-dehydroquinate contacts are provided by residues 27–29 and R53; that span reads EVR. H111 acts as the Proton donor/acceptor in catalysis. The Schiff-base intermediate with substrate role is filled by K138. Residues R175 and Q197 each contribute to the 3-dehydroquinate site.

This sequence belongs to the type-I 3-dehydroquinase family. Homodimer.

It catalyses the reaction 3-dehydroquinate = 3-dehydroshikimate + H2O. It participates in metabolic intermediate biosynthesis; chorismate biosynthesis; chorismate from D-erythrose 4-phosphate and phosphoenolpyruvate: step 3/7. Functionally, involved in the third step of the chorismate pathway, which leads to the biosynthesis of aromatic amino acids. Catalyzes the cis-dehydration of 3-dehydroquinate (DHQ) and introduces the first double bond of the aromatic ring to yield 3-dehydroshikimate. This chain is 3-dehydroquinate dehydratase, found in Thermococcus gammatolerans (strain DSM 15229 / JCM 11827 / EJ3).